Reading from the N-terminus, the 277-residue chain is Tryptophan synthase alpha chain (277 aa).

Catalysis depends on proton acceptor residues Glu-43 and Glu-54.

Belongs to the TrpA family. Tetramer of two alpha and two beta chains.

It carries out the reaction (1S,2R)-1-C-(indol-3-yl)glycerol 3-phosphate + L-serine = D-glyceraldehyde 3-phosphate + L-tryptophan + H2O. The protein operates within amino-acid biosynthesis; L-tryptophan biosynthesis; L-tryptophan from chorismate: step 5/5. The alpha subunit is responsible for the aldol cleavage of indoleglycerol phosphate to indole and glyceraldehyde 3-phosphate. This chain is Tryptophan synthase alpha chain, found in Haloferax volcanii (strain ATCC 29605 / DSM 3757 / JCM 8879 / NBRC 14742 / NCIMB 2012 / VKM B-1768 / DS2) (Halobacterium volcanii).